The primary structure comprises 199 residues: Tegument protein UL14 homolog (199 aa).

The span at T176 to N191 shows a compositional bias: polar residues. A disordered region spans residues T176–V199.

It belongs to the alphaherpesvirinae HHV-1 UL14 protein family.

The protein resides in the virion tegument. Its subcellular location is the host cytoplasm. It is found in the host nucleus. Functionally, contributes to the nuclear transport of the viral transcriptional activator VP16 homolog during the early phase of infection. Therefore, participates indirectly in the regulation of the immediate-early gene expression. Additionally, seems to be important for efficient nuclear targeting of capsids. The protein is Tegument protein UL14 homolog of Varicella-zoster virus (strain Dumas) (HHV-3).